The following is a 247-amino-acid chain: ATP synthase subunit a, chloroplastic (247 aa).

5 helical membrane-spanning segments follow: residues 38-58, 95-115, 134-154, 199-219, and 220-240; these read QVLI…TIAV, VPFI…GALL, INTT…AGFT, LVVV…VMFL, and GLFT…AYIG.

Belongs to the ATPase A chain family. As to quaternary structure, F-type ATPases have 2 components, CF(1) - the catalytic core - and CF(0) - the membrane proton channel. CF(1) has five subunits: alpha(3), beta(3), gamma(1), delta(1), epsilon(1). CF(0) has four main subunits: a, b, b' and c.

It localises to the plastid. The protein localises to the chloroplast thylakoid membrane. Its function is as follows. Key component of the proton channel; it plays a direct role in the translocation of protons across the membrane. The chain is ATP synthase subunit a, chloroplastic from Liriodendron tulipifera (Tuliptree).